The following is a 388-amino-acid chain: Diacylglycerol O-acyltransferase 2 (388 aa).

Residues 1–69 lie on the Cytoplasmic side of the membrane; that stretch reads MKTLIAAYSG…NRSKVEKHLQ (69 aa). The chain crosses the membrane as a helical span at residues 70–88; it reads VISVLQWVLSFLVLGVACS. The Lumenal segment spans residues 89 to 92; that stretch reads VILM. A helical transmembrane segment spans residues 93–112; that stretch reads YTFCTDCWLIAALYFTWLAF. At 113–388 the chain is on the cytoplasmic side; it reads DWNTPKKGGR…LPETEVLEVN (276 aa).

It belongs to the diacylglycerol acyltransferase family. Forms multimeric complexes consisting of several DGAT2 subunits. Interacts with SLC27A1 and this interaction is enhanced in the presence of ZFYVE1.

The protein localises to the endoplasmic reticulum membrane. The protein resides in the lipid droplet. Its subcellular location is the cytoplasm. It is found in the perinuclear region. It carries out the reaction an acyl-CoA + a 1,2-diacyl-sn-glycerol = a triacyl-sn-glycerol + CoA. The catalysed reaction is all-trans-retinol + an acyl-CoA = an all-trans-retinyl ester + CoA. It catalyses the reaction 2-(9Z-octadecenoyl)-glycerol + (9Z)-octadecenoyl-CoA = 1,2-di-(9Z-octadecenoyl)-sn-glycerol + CoA. The enzyme catalyses 1,2-di-(9Z-octadecenoyl)-sn-glycerol + (9Z)-octadecenoyl-CoA = 1,2,3-tri-(9Z-octadecenoyl)-glycerol + CoA. It carries out the reaction all-trans-retinol + hexadecanoyl-CoA = all-trans-retinyl hexadecanoate + CoA. The catalysed reaction is 1-O-(9Z-octadecenyl)-glycerol + (9Z)-octadecenoyl-CoA = 1-O-(9Z-octadecyl)-3-(9Z-octadecenoyl)-glycerol + CoA. It catalyses the reaction 1-(9Z-octadecenoyl)-glycerol + (9Z)-octadecenoyl-CoA = 1,2-di-(9Z-octadecenoyl)-glycerol + CoA. The enzyme catalyses 1,2-di-(9Z-octadecenoyl)-sn-glycerol + hexadecanoyl-CoA = 1,2-di-(9Z)-octadecenoyl-3-hexadecanoyl-sn-glycerol + CoA. It carries out the reaction 1,3-di-(9Z-octadecenoyl)-glycerol + (9Z)-octadecenoyl-CoA = 1,2,3-tri-(9Z-octadecenoyl)-glycerol + CoA. The catalysed reaction is 2,3-di-(9Z)-octadecenoyl-sn-glycerol + (9Z)-octadecenoyl-CoA = 1,2,3-tri-(9Z-octadecenoyl)-glycerol + CoA. It catalyses the reaction 2-(9Z-octadecenoyl)-glycerol + hexadecanoyl-CoA = 1-hexadecanoyl-2-(9Z-octadecenoyl)-sn-glycerol + CoA. It participates in glycerolipid metabolism; triacylglycerol biosynthesis. Inhibited by niacin. Functionally, essential acyltransferase that catalyzes the terminal and only committed step in triacylglycerol synthesis by using diacylglycerol and fatty acyl CoA as substrates. Required for synthesis and storage of intracellular triglycerides. Probably plays a central role in cytosolic lipid accumulation. In liver, is primarily responsible for incorporating endogenously synthesized fatty acids into triglycerides. Also functions as an acyl-CoA retinol acyltransferase (ARAT). Also able to use 1-monoalkylglycerol (1-MAkG) as an acyl acceptor for the synthesis of monoalkyl-monoacylglycerol (MAMAG). The protein is Diacylglycerol O-acyltransferase 2 of Rattus norvegicus (Rat).